We begin with the raw amino-acid sequence, 181 residues long: uncharacterized protein (181 aa).

This is an uncharacterized protein from Rickettsia prowazekii (strain Madrid E).